Here is an 80-residue protein sequence, read N- to C-terminus: MVQDLPTPIGAGIYNIYTGVKHRDELAGASMPTVAQLGLEPPRFCAECGRRMVVQVRPDGWRAKCSRHGQVDSVDMEAKR.

The protein belongs to the BsaP family. Iron-sulfur cluster serves as cofactor.

In terms of biological role, required for the activity of the biotin synthase BioB. In Mycobacterium leprae (strain TN), this protein is Biotin synthase auxiliary protein.